Here is a 298-residue protein sequence, read N- to C-terminus: MQTQRLRIAIQKKGRLSKESQALLKQCGVKFNVMGERLVVHSENMPIDLLLVRDDDIPGLIMDGVVDLGFIGENELEEVRLDRKALGEPCEFVQLRRLDFGGCRLSIAIDKDEEYNGPQDLAGKRIATTYPQLLKAYMDEAGVPFSTCMLTGSVEVAPRAGLADAIADLVSTGATLEANGLKEAEVIFRSKATLIQRIGEFDADKAELINKLLTRMQGVQQAKESKYIMLHAPAGKLEQIKALLPGAEDPTVLPLSADKQKVAVHLVSTENLFWETMEQLKELGASSILVLPIEKMME.

The protein belongs to the ATP phosphoribosyltransferase family. Long subfamily. It depends on Mg(2+) as a cofactor.

Its subcellular location is the cytoplasm. The enzyme catalyses 1-(5-phospho-beta-D-ribosyl)-ATP + diphosphate = 5-phospho-alpha-D-ribose 1-diphosphate + ATP. It functions in the pathway amino-acid biosynthesis; L-histidine biosynthesis; L-histidine from 5-phospho-alpha-D-ribose 1-diphosphate: step 1/9. Feedback inhibited by histidine. In terms of biological role, catalyzes the condensation of ATP and 5-phosphoribose 1-diphosphate to form N'-(5'-phosphoribosyl)-ATP (PR-ATP). Has a crucial role in the pathway because the rate of histidine biosynthesis seems to be controlled primarily by regulation of HisG enzymatic activity. In Vibrio parahaemolyticus serotype O3:K6 (strain RIMD 2210633), this protein is ATP phosphoribosyltransferase.